The following is a 379-amino-acid chain: Retron Se72 reverse transcriptase (379 aa).

The region spanning 1–245 is the Reverse transcriptase domain; sequence MNKPRFNGTP…SKLSVTGLWV (245 aa). Asp109, Asp188, and Asp189 together coordinate Mg(2+).

Belongs to the bacterial reverse transcriptase family.

It catalyses the reaction DNA(n) + a 2'-deoxyribonucleoside 5'-triphosphate = DNA(n+1) + diphosphate. In terms of biological role, reverse transcriptase (RT) component of antiviral defense system retron Se72, composed of a non-coding RNA (ncRNA), this reverse transcriptase (RT) and the following cold shock-like protein. Expression of retron Se72 confers protection against bacteriophage lambda. At multiplicity of infection (MOI) of 0.02 cultures slow growth when infected with lambda but do not collapse, at MOI 2 cultures enter growth stasis. Responsible for synthesis of msDNA (a branched molecule with RNA linked by a 2',5'-phosphodiester bond to ssDNA). The retron transcript serves as primer (from a conserved internal G residue) and template for the reaction, and codes for the RT. The DNA segment is predicted to be 72 bases long. In Salmonella heidelberg (strain 579083-10), this protein is Retron Se72 reverse transcriptase.